The following is a 252-amino-acid chain: 2-succinyl-6-hydroxy-2,4-cyclohexadiene-1-carboxylate synthase (252 aa).

Belongs to the AB hydrolase superfamily. MenH family. In terms of assembly, monomer.

The catalysed reaction is 5-enolpyruvoyl-6-hydroxy-2-succinyl-cyclohex-3-ene-1-carboxylate = (1R,6R)-6-hydroxy-2-succinyl-cyclohexa-2,4-diene-1-carboxylate + pyruvate. The protein operates within quinol/quinone metabolism; 1,4-dihydroxy-2-naphthoate biosynthesis; 1,4-dihydroxy-2-naphthoate from chorismate: step 3/7. It functions in the pathway quinol/quinone metabolism; menaquinone biosynthesis. Functionally, catalyzes a proton abstraction reaction that results in 2,5-elimination of pyruvate from 2-succinyl-5-enolpyruvyl-6-hydroxy-3-cyclohexene-1-carboxylate (SEPHCHC) and the formation of 2-succinyl-6-hydroxy-2,4-cyclohexadiene-1-carboxylate (SHCHC). The sequence is that of 2-succinyl-6-hydroxy-2,4-cyclohexadiene-1-carboxylate synthase from Citrobacter koseri (strain ATCC BAA-895 / CDC 4225-83 / SGSC4696).